We begin with the raw amino-acid sequence, 148 residues long: SsrA-binding protein (148 aa).

Belongs to the SmpB family.

It localises to the cytoplasm. Its function is as follows. Required for rescue of stalled ribosomes mediated by trans-translation. Binds to transfer-messenger RNA (tmRNA), required for stable association of tmRNA with ribosomes. tmRNA and SmpB together mimic tRNA shape, replacing the anticodon stem-loop with SmpB. tmRNA is encoded by the ssrA gene; the 2 termini fold to resemble tRNA(Ala) and it encodes a 'tag peptide', a short internal open reading frame. During trans-translation Ala-aminoacylated tmRNA acts like a tRNA, entering the A-site of stalled ribosomes, displacing the stalled mRNA. The ribosome then switches to translate the ORF on the tmRNA; the nascent peptide is terminated with the 'tag peptide' encoded by the tmRNA and targeted for degradation. The ribosome is freed to recommence translation, which seems to be the essential function of trans-translation. In Pseudothermotoga lettingae (strain ATCC BAA-301 / DSM 14385 / NBRC 107922 / TMO) (Thermotoga lettingae), this protein is SsrA-binding protein.